The primary structure comprises 131 residues: Large ribosomal subunit protein bL12c (131 aa).

Basic and acidic residues predominate over residues 106-125 (KDNTNKENSEEIKQQLEEAG). Residues 106–131 (KDNTNKENSEEIKQQLEEAGAKVSIK) form a disordered region.

It belongs to the bacterial ribosomal protein bL12 family. As to quaternary structure, homodimer. Part of the ribosomal stalk of the 50S ribosomal subunit. Forms a multimeric L10(L12)X complex, where L10 forms an elongated spine to which 2 to 4 L12 dimers bind in a sequential fashion. Binds GTP-bound translation factors.

Its subcellular location is the plastid. The protein resides in the chloroplast. Functionally, forms part of the ribosomal stalk which helps the ribosome interact with GTP-bound translation factors. Is thus essential for accurate translation. The sequence is that of Large ribosomal subunit protein bL12c from Gracilaria tenuistipitata var. liui (Red alga).